A 406-amino-acid polypeptide reads, in one-letter code: Cysteine desulfurase (406 aa).

The residue at position 226 (Lys-226) is an N6-(pyridoxal phosphate)lysine. The Cysteine persulfide intermediate role is filled by Cys-364.

It belongs to the class-V pyridoxal-phosphate-dependent aminotransferase family. Csd subfamily. Homodimer. Interacts with SufE and the SufBCD complex composed of SufB, SufC and SufD. The interaction with SufE is required to mediate the direct transfer of the sulfur atom from the S-sulfanylcysteine. The cofactor is pyridoxal 5'-phosphate.

The protein localises to the cytoplasm. It catalyses the reaction (sulfur carrier)-H + L-cysteine = (sulfur carrier)-SH + L-alanine. It carries out the reaction L-selenocysteine + AH2 = hydrogenselenide + L-alanine + A + H(+). Its pathway is cofactor biosynthesis; iron-sulfur cluster biosynthesis. In terms of biological role, cysteine desulfurases mobilize the sulfur from L-cysteine to yield L-alanine, an essential step in sulfur metabolism for biosynthesis of a variety of sulfur-containing biomolecules. Component of the suf operon, which is activated and required under specific conditions such as oxidative stress and iron limitation. Acts as a potent selenocysteine lyase in vitro, that mobilizes selenium from L-selenocysteine. Selenocysteine lyase activity is however unsure in vivo. This is Cysteine desulfurase from Escherichia coli O9:H4 (strain HS).